The primary structure comprises 23 residues: M-poneritoxin-Nc1a (23 aa).

The protein belongs to the non-disulfide-bridged peptide (NDBP) superfamily. Medium-length antimicrobial peptide (group 3) family. Ponericin-W subfamily. In terms of tissue distribution, expressed by the venom gland.

Its subcellular location is the secreted. It localises to the target cell membrane. Its function is as follows. Membrane-perturbating peptide with multiple activities. It is insecticidal, since it induces contractile paralysis in insects (L.cuprina) during several hours, and death after 24 hours. It shows antibacterial activity with higher activity against Gram-positive than Gram-negative bacteria. It is also antiparasitic, since it potently inhibits the larval development of the major pathogenic nematode of ruminants (H.contortus, IC(50)=5.1 uM), but fails to reduce the motility of adult males of the other nematode B.malayi. It also shows cytotoxic activity against HEK293 cells (EC(50)=12-14 uM) and induces hemolysis in human erythrocytes (EC(50)=28.6-48.2 uM). In addition, it causes an important increase in intracellular calcium concentration on neuronal and epithelial cell lines, which supports a non-specific membrane perturbation mechanism of action. In vivo, it induces pain by intraplantar injection into mice, suggesting a defensive function against vertebrate predators. The chain is M-poneritoxin-Nc1a from Neoponera commutata (Large hunting ant).